Here is a 584-residue protein sequence, read N- to C-terminus: Delta 8-(E)-sphingolipid desaturase (584 aa).

The 76-residue stretch at 7-82 (KKIFTRSQII…FTRFKIGEIE (76 aa)) folds into the Cytochrome b5 heme-binding domain. Heme contacts are provided by H42 and H65. Residues 109–134 (NKNTSNKKTLDSKLDNDSSNSTSDLE) are disordered. A helical membrane pass occupies residues 261 to 281 (LFLYSLSFLKINQLFLSAVFM). Positions 293–297 (HDAGH) match the Histidine box-1 motif. The chain crosses the membrane as a helical span at residues 306 to 326 (IDNIFGMLIADWFGGLSLGWW). A Histidine box-2 motif is present at residues 330–334 (HNVHH). The next 3 helical transmembrane spans lie at 386–403 (YLYYPILCFGRFNLYRLS), 423–443 (YFEFFGLSFFFYWFFYLLVFK), and 455–475 (VMVSHITTMLVHVQITLSHFA). The short motif at 514 to 518 (QAIHH) is the Histidine box-3 element.

It belongs to the fatty acid desaturase type 1 family.

Its subcellular location is the membrane. It catalyses the reaction an N-acylsphing-4-enine + 2 Fe(II)-[cytochrome b5] + O2 + 2 H(+) = a (4E,8E)-4-sphinga-4,8-dienine ceramide + 2 Fe(III)-[cytochrome b5] + 2 H2O. It functions in the pathway lipid metabolism; sphingolipid metabolism. Its function is as follows. Delta(8)-fatty-acid desaturase which introduces a double bond at the 8-position in the long-chain base (LCB) of ceramides. Required for the formation of the di-unsaturated sphingoid base (E,E)-sphinga-4,8-dienine during glucosylceramide (GluCer) biosynthesis. The protein is Delta 8-(E)-sphingolipid desaturase of Candida albicans (strain SC5314 / ATCC MYA-2876) (Yeast).